The following is a 426-amino-acid chain: Enolase (426 aa).

Residue Gln-163 coordinates (2R)-2-phosphoglycerate. Glu-205 functions as the Proton donor in the catalytic mechanism. Asp-242, Glu-286, and Asp-313 together coordinate Mg(2+). (2R)-2-phosphoglycerate is bound by residues Lys-338, Arg-367, Ser-368, and Lys-389. The active-site Proton acceptor is the Lys-338.

Belongs to the enolase family. The cofactor is Mg(2+).

It is found in the cytoplasm. Its subcellular location is the secreted. The protein localises to the cell surface. It catalyses the reaction (2R)-2-phosphoglycerate = phosphoenolpyruvate + H2O. Its pathway is carbohydrate degradation; glycolysis; pyruvate from D-glyceraldehyde 3-phosphate: step 4/5. Catalyzes the reversible conversion of 2-phosphoglycerate (2-PG) into phosphoenolpyruvate (PEP). It is essential for the degradation of carbohydrates via glycolysis. The polypeptide is Enolase (Helicobacter pylori (strain HPAG1)).